Reading from the N-terminus, the 390-residue chain is Monomeric sarcosine oxidase (390 aa).

6-36 (DVIVVGAGSMGMAAGYQLAKQGVKTLLVDAF) contacts FAD. The residue at position 316 (Cys-316) is an S-8alpha-FAD cysteine.

In terms of assembly, monomer. Requires FAD as cofactor.

It localises to the cytoplasm. The catalysed reaction is sarcosine + O2 + H2O = formaldehyde + glycine + H2O2. Pyrrole-2-carboxylate is a competitive inhibitor. N-(cyclopropyl)glycine (CPG) is a mechanism-based inhibitor and inactivates the enzyme by covalently modifying the flavin. Functionally, catalyzes the oxidative demethylation of sarcosine. Can also oxidize other secondary amino acids such as N-methyl-L-alanine. This Bacillus sp. (strain B-0618) protein is Monomeric sarcosine oxidase (soxA).